The following is a 500-amino-acid chain: Intracellular exo-alpha-(1-&gt;5)-L-arabinofuranosidase 1 (500 aa).

Residues Glu27, Asn72, and Asn172 each contribute to the alpha-L-arabinofuranose site. The Proton donor/acceptor role is filled by Glu173. Residues Tyr244, Glu292, and Gln349 each coordinate alpha-L-arabinofuranose. Residue Glu292 is the Nucleophile of the active site.

The protein belongs to the glycosyl hydrolase 51 family. Homohexamer; trimer of dimers.

Its subcellular location is the cytoplasm. It catalyses the reaction Hydrolysis of terminal non-reducing alpha-L-arabinofuranoside residues in alpha-L-arabinosides.. The catalysed reaction is (20S)-ginsenoside Rc + H2O = L-arabinofuranose + (20S)-ginsenoside Rd. The protein operates within glycan metabolism; L-arabinan degradation. With respect to regulation, at a concentration of 5 mM, K(+), Cu(2+) and Ni(2+) exhibit inhibitory effects on the activity. Additionally, the chemical reagent SDS also displays a certain degree of inhibition. Enzymatic activity is largely unaffected by product feedback inhibition. Involved in the degradation of arabinan and is a key enzyme in the complete degradation of the plant cell wall. Catalyzes the cleavage of terminal alpha-(1-&gt;5)-arabinofuranosyl bonds in different hemicellulosic homopolysaccharides (branched and debranched arabinans). It acts preferentially on arabinotriose, arabinobiose and linear alpha-(1-&gt;5)-L-arabinan, and is much less effective on branched sugar beet arabinan. When expressed in E.coli, the recombinant enyzme can hydrolyze, with relatively low catalytic efficiency, the terminal alpha-L-arabinofuranoside at the C20 position of ginsenoside Rc to produce ginsenoside Rd, a rare ginsenoside that exhibits diverse and powerful pharmacological activities. The protein is Intracellular exo-alpha-(1-&gt;5)-L-arabinofuranosidase 1 of Bacillus subtilis (strain 168).